Here is a 363-residue protein sequence, read N- to C-terminus: NAD(P)H-quinone oxidoreductase subunit 1, chloroplastic (363 aa).

A run of 8 helical transmembrane segments spans residues 27 to 47, 93 to 113, 124 to 144, 162 to 182, 200 to 220, 250 to 270, 303 to 323, and 343 to 363; these read LIPI…IVWL, WLFS…YLVV, LGVG…GLLM, AAQA…VALL, ILGW…IASL, FGLF…FVSV, ATLG…LSIL, and FLLP…LALL.

The protein belongs to the complex I subunit 1 family. In terms of assembly, NDH is composed of at least 16 different subunits, 5 of which are encoded in the nucleus.

The protein localises to the plastid. It is found in the chloroplast thylakoid membrane. It carries out the reaction a plastoquinone + NADH + (n+1) H(+)(in) = a plastoquinol + NAD(+) + n H(+)(out). The enzyme catalyses a plastoquinone + NADPH + (n+1) H(+)(in) = a plastoquinol + NADP(+) + n H(+)(out). NDH shuttles electrons from NAD(P)H:plastoquinone, via FMN and iron-sulfur (Fe-S) centers, to quinones in the photosynthetic chain and possibly in a chloroplast respiratory chain. The immediate electron acceptor for the enzyme in this species is believed to be plastoquinone. Couples the redox reaction to proton translocation, and thus conserves the redox energy in a proton gradient. This chain is NAD(P)H-quinone oxidoreductase subunit 1, chloroplastic, found in Chaetosphaeridium globosum (Charophycean green alga).